The following is a 212-amino-acid chain: GrpE protein homolog, mitochondrial (212 aa).

This sequence belongs to the GrpE family. In terms of assembly, component of the PAM complex, at least composed of mtHsp70, MGE1, TIM44, PAM16, PAM17 and PAM18.

The protein localises to the mitochondrion matrix. In terms of biological role, essential component of the PAM complex, a complex required for the translocation of transit peptide-containing proteins from the inner membrane into the mitochondrial matrix in an ATP-dependent manner. Seems to control the nucleotide-dependent binding of SSC1 to substrate proteins. The protein is GrpE protein homolog, mitochondrial (mge1) of Eremothecium gossypii (strain ATCC 10895 / CBS 109.51 / FGSC 9923 / NRRL Y-1056) (Yeast).